A 268-amino-acid polypeptide reads, in one-letter code: Mitochondrial distribution and morphology protein 12 (268 aa).

Positions 1–256 (MSFEINWQDL…WPSWINLDFN (256 aa)) constitute an SMP-LTD domain. The interval 75–94 (LPKDKIPEESDSGCQSADGE) is disordered.

This sequence belongs to the MDM12 family. As to quaternary structure, component of the ER-mitochondria encounter structure (ERMES) or MDM complex, composed of MMM1, MDM10, MDM12 and MDM34. An MMM1 homodimer associates with one molecule of MDM12 on each side in a pairwise head-to-tail manner, and the SMP-LTD domains of MMM1 and MDM12 generate a continuous hydrophobic tunnel for phospholipid trafficking.

It is found in the mitochondrion outer membrane. Its subcellular location is the endoplasmic reticulum membrane. Its function is as follows. Component of the ERMES/MDM complex, which serves as a molecular tether to connect the endoplasmic reticulum (ER) and mitochondria. Components of this complex are involved in the control of mitochondrial shape and protein biogenesis, and function in nonvesicular lipid trafficking between the ER and mitochondria. MDM12 is required for the interaction of the ER-resident membrane protein MMM1 and the outer mitochondrial membrane-resident beta-barrel protein MDM10. The MDM12-MMM1 subcomplex functions in the major beta-barrel assembly pathway that is responsible for biogenesis of all mitochondrial outer membrane beta-barrel proteins, and acts in a late step after the SAM complex. The MDM10-MDM12-MMM1 subcomplex further acts in the TOM40-specific pathway after the action of the MDM12-MMM1 complex. Essential for establishing and maintaining the structure of mitochondria and maintenance of mtDNA nucleoids. The sequence is that of Mitochondrial distribution and morphology protein 12 from Lachancea thermotolerans (strain ATCC 56472 / CBS 6340 / NRRL Y-8284) (Yeast).